A 220-amino-acid polypeptide reads, in one-letter code: Peptidyl-tRNA hydrolase (220 aa).

Y14 contributes to the tRNA binding site. Residue H19 is the Proton acceptor of the active site. TRNA-binding residues include F60, N62, and N106.

The protein belongs to the PTH family. As to quaternary structure, monomer.

It localises to the cytoplasm. It carries out the reaction an N-acyl-L-alpha-aminoacyl-tRNA + H2O = an N-acyl-L-amino acid + a tRNA + H(+). Functionally, hydrolyzes ribosome-free peptidyl-tRNAs (with 1 or more amino acids incorporated), which drop off the ribosome during protein synthesis, or as a result of ribosome stalling. In terms of biological role, catalyzes the release of premature peptidyl moieties from peptidyl-tRNA molecules trapped in stalled 50S ribosomal subunits, and thus maintains levels of free tRNAs and 50S ribosomes. In Campylobacter hominis (strain ATCC BAA-381 / DSM 21671 / CCUG 45161 / LMG 19568 / NCTC 13146 / CH001A), this protein is Peptidyl-tRNA hydrolase.